A 190-amino-acid polypeptide reads, in one-letter code: Potassium-transporting ATPase KdpC subunit (190 aa).

Residues 10–30 traverse the membrane as a helical segment; the sequence is TFIFLLLITGGVYPLLTTALG.

The protein belongs to the KdpC family. As to quaternary structure, the system is composed of three essential subunits: KdpA, KdpB and KdpC.

The protein resides in the cell inner membrane. Functionally, part of the high-affinity ATP-driven potassium transport (or Kdp) system, which catalyzes the hydrolysis of ATP coupled with the electrogenic transport of potassium into the cytoplasm. This subunit acts as a catalytic chaperone that increases the ATP-binding affinity of the ATP-hydrolyzing subunit KdpB by the formation of a transient KdpB/KdpC/ATP ternary complex. The chain is Potassium-transporting ATPase KdpC subunit from Escherichia coli O9:H4 (strain HS).